The chain runs to 295 residues: MPWIQIKLNATNENAEQIGDMLMEETGALSVTFLDAQDTPVFEPLPGETRLWGDTDILALYDAEADTNFIIDQIKASNMLAENFAYKVEQLEDKDWEREWMENFHPMKFGERLWICPSWREVPEPDAVNVMLDPGLAFGTGTHPTTALCLEWLESMDLSGKTVIDFGCGSGILAIAAIKLGAEKVIGIDIDPQALLASKDNAERNGVADKLEVYLPQNQPEGLIADVVVANILAGPLRELAPIIKGLVKPNGALAMSGVLDTQAEDVASYYRDELHIDPIVEQSEWCRISGRKQG.

S-adenosyl-L-methionine contacts are provided by threonine 146, glycine 167, aspartate 189, and asparagine 231.

The protein belongs to the methyltransferase superfamily. PrmA family.

It is found in the cytoplasm. The catalysed reaction is L-lysyl-[protein] + 3 S-adenosyl-L-methionine = N(6),N(6),N(6)-trimethyl-L-lysyl-[protein] + 3 S-adenosyl-L-homocysteine + 3 H(+). Functionally, methylates ribosomal protein L11. The sequence is that of Ribosomal protein L11 methyltransferase from Vibrio parahaemolyticus serotype O3:K6 (strain RIMD 2210633).